Consider the following 1031-residue polypeptide: Translation initiation factor IF-2 (1031 aa).

2 disordered regions span residues 33–369 (KSHS…GDVL) and 388–436 (LKPL…AESL). Over residues 45 to 56 (ELVRSKLSEPRV) the composition is skewed to basic and acidic residues. A compositionally biased stretch (low complexity) spans 96–105 (PAPAQQQAAA). Positions 108-123 (ASSSKPSPQRPDQLSS) are enriched in polar residues. A compositionally biased stretch (low complexity) spans 148–171 (PAAQEPQPAAASTRPEAAAKAGSP). Pro residues predominate over residues 184 to 200 (VLPPPRRAASGPEPPQR). Basic and acidic residues predominate over residues 250–281 (TRPEPRSPVAKKEESSDSGKADEAPRPQRRLE). Residues 286–299 (PTRPVAKPLPPEPD) are compositionally biased toward pro residues. Positions 419 to 435 (RPSASAEATAPEAAAES) are enriched in low complexity. The region spanning 522-695 (PRPPVVTIMG…LLVADVAELQ (174 aa)) is the tr-type G domain. A G1 region spans residues 531–538 (GHVDHGKT). 531-538 (GHVDHGKT) provides a ligand contact to GTP. A G2 region spans residues 556–560 (GITQR). The tract at residues 581–584 (DTPG) is G3. Residues 581 to 585 (DTPGH) and 635 to 638 (NKID) contribute to the GTP site. Residues 635–638 (NKID) form a G4 region. The interval 671-673 (SAL) is G5.

The protein belongs to the TRAFAC class translation factor GTPase superfamily. Classic translation factor GTPase family. IF-2 subfamily.

It localises to the cytoplasm. In terms of biological role, one of the essential components for the initiation of protein synthesis. Protects formylmethionyl-tRNA from spontaneous hydrolysis and promotes its binding to the 30S ribosomal subunits. Also involved in the hydrolysis of GTP during the formation of the 70S ribosomal complex. The sequence is that of Translation initiation factor IF-2 from Synechococcus sp. (strain JA-3-3Ab) (Cyanobacteria bacterium Yellowstone A-Prime).